Reading from the N-terminus, the 69-residue chain is Beta-defensin 1 (69 aa).

Residues 1-21 form the signal peptide; that stretch reads MKTHYFLLVMLFFLFSQMELG. The propeptide occupies 22-32; that stretch reads AGILTSLGRRT. 3 cysteine pairs are disulfide-bonded: cysteine 37/cysteine 66, cysteine 44/cysteine 59, and cysteine 49/cysteine 67.

It belongs to the beta-defensin family. As to quaternary structure, monomer. Homodimer. Highly expressed in kidney.

The protein localises to the secreted. It localises to the membrane. Functionally, has bactericidal activity. May act as a ligand for C-C chemokine receptor CCR6. Positively regulates the sperm motility and bactericidal activity in a CCR6-dependent manner. Binds to CCR6 and triggers Ca2+ mobilization in the sperm which is important for its motility. The sequence is that of Beta-defensin 1 (Defb1) from Rattus norvegicus (Rat).